We begin with the raw amino-acid sequence, 399 residues long: UDP-galactopyranose mutase (399 aa).

Residues serine 25, 44-45 (EK), asparagine 52, and 71-72 (HI) contribute to the FAD site. 6 residues coordinate UDP-alpha-D-galactose: serine 171, tryptophan 175, tyrosine 200, asparagine 297, arginine 306, and tyrosine 345. Arginine 374 serves as a coordination point for FAD. Position 380 (tyrosine 380) interacts with UDP-alpha-D-galactose. An FAD-binding site is contributed by 381–386 (IDMDRA).

Belongs to the UDP-galactopyranose/dTDP-fucopyranose mutase family. FAD is required as a cofactor.

It catalyses the reaction UDP-alpha-D-galactose = UDP-alpha-D-galactofuranose. Its function is as follows. Involved in the conversion of UDP-GalP into UDP-GalF through a 2-keto intermediate. In Mycoplasma pneumoniae (strain ATCC 29342 / M129 / Subtype 1) (Mycoplasmoides pneumoniae), this protein is UDP-galactopyranose mutase (glf).